Consider the following 102-residue polypeptide: Small ribosomal subunit protein uS10 (102 aa).

It belongs to the universal ribosomal protein uS10 family. Part of the 30S ribosomal subunit.

Its function is as follows. Involved in the binding of tRNA to the ribosomes. This Lacticaseibacillus casei (strain BL23) (Lactobacillus casei) protein is Small ribosomal subunit protein uS10.